A 291-amino-acid polypeptide reads, in one-letter code: MNKLTIATRKSKLAQTQTEIIMKSLKDKFNIDSEKMLIVTEGDRKLDVSLAKIGGKGLFVKDIEIALLEKRADGAVHSMKDVPYELSHEFEIAAITEREDIRDVLISKDNIPFKELRKGAIIGTSSIRRACQLKLMRNDLDIVPIRGNVQTRLEKMKEQNLDGIILASAGLKRLNEEDIITEYFDPKVFIPAVAQGALGIECLKTSSAKKYFEKMEDSNAKLTVEAERSFMRMLNGDCHSLIGAYSEIQGNDLYMIGIYDIGGRIVKKDILGDKNDHIELGRKLANKILEI.

At Cys238 the chain carries S-(dipyrrolylmethanemethyl)cysteine.

This sequence belongs to the HMBS family. In terms of assembly, monomer. It depends on dipyrromethane as a cofactor.

The catalysed reaction is 4 porphobilinogen + H2O = hydroxymethylbilane + 4 NH4(+). It functions in the pathway porphyrin-containing compound metabolism; protoporphyrin-IX biosynthesis; coproporphyrinogen-III from 5-aminolevulinate: step 2/4. Its function is as follows. Tetrapolymerization of the monopyrrole PBG into the hydroxymethylbilane pre-uroporphyrinogen in several discrete steps. This chain is Porphobilinogen deaminase, found in Clostridium beijerinckii (strain ATCC 51743 / NCIMB 8052) (Clostridium acetobutylicum).